Consider the following 336-residue polypeptide: Nicotinate-nucleotide--dimethylbenzimidazole phosphoribosyltransferase (336 aa).

Residues 20 to 41 are disordered; sequence GPDAAARAGAEERNGQLTKPPG. Glu-304 acts as the Proton acceptor in catalysis.

This sequence belongs to the CobT family.

It carries out the reaction 5,6-dimethylbenzimidazole + nicotinate beta-D-ribonucleotide = alpha-ribazole 5'-phosphate + nicotinate + H(+). It functions in the pathway nucleoside biosynthesis; alpha-ribazole biosynthesis; alpha-ribazole from 5,6-dimethylbenzimidazole: step 1/2. Functionally, catalyzes the synthesis of alpha-ribazole-5'-phosphate from nicotinate mononucleotide (NAMN) and 5,6-dimethylbenzimidazole (DMB). The chain is Nicotinate-nucleotide--dimethylbenzimidazole phosphoribosyltransferase from Ruegeria pomeroyi (strain ATCC 700808 / DSM 15171 / DSS-3) (Silicibacter pomeroyi).